A 461-amino-acid polypeptide reads, in one-letter code: Transforming growth factor beta-1-induced transcript 1 protein (461 aa).

Position 1 is an N-acetylmethionine (methionine 1). A disordered region spans residues 1–87 (MEDLDALLSD…PFSSSSGVLG (87 aa)). The interval 1-200 (MEDLDALLSD…GCPSPPGQTS (200 aa)) is transcription activation. An interaction with PTK2B/PYK2 region spans residues 1–240 (MEDLDALLSD…CNKPIAGQVV (240 aa)). The LD motif 1 motif lies at 3–15 (DLDALLSDLETTT). At threonine 33 the chain carries Phosphothreonine. Tyrosine 38 is subject to Phosphotyrosine. The span at 44–53 (TGSGESSGTT) shows a compositional bias: low complexity. Residue tyrosine 60 is modified to Phosphotyrosine. Phosphoserine is present on serine 68. The tract at residues 83-136 (SGVLGNGLCELDRLLQELNATQFNITDEIMSQFPSSKMAEGEEKEDQSEDKSSP) is interaction with PTK2/FAK1. Positions 92 to 104 (ELDRLLQELNATQ) match the LD motif 2 motif. Positions 116 to 154 (PSSKMAEGEEKEDQSEDKSSPTVPPSPFPAPSKPSATSA) are disordered. A compositionally biased stretch (pro residues) spans 137-147 (TVPPSPFPAPS). Serine 141, serine 164, and serine 186 each carry phosphoserine. The LD motif 3 signature appears at 157-168 (ELDRLMASLSDF). The disordered stretch occupies residues 171-204 (QNHLPASGPPQPPAASPTREGCPSPPGQTSKGSL). Threonine 188 bears the Phosphothreonine mark. Serine 194 carries the post-translational modification Phosphoserine. The LD motif 4 signature appears at 203–215 (SLDTMLGLLQSDL). LIM zinc-binding domains follow at residues 226–285 (GLCG…RFSP), 286–343 (RCGF…QLFA), 344–403 (PRCQ…QRGS), and 404–461 (LCAT…KLFG). Serine 403 bears the Phosphoserine mark. Residue threonine 407 is modified to Phosphothreonine.

The protein belongs to the paxillin family. Homooligomer. Interacts with PPARG. Interacts with TRAF4. Interacts with CRIP2. Interacts with HSPB1. Interacts with ILK. Interacts with LIMS1 and LIMS2. Interacts with NCK2. Interacts with NUDT16L1. Interacts with PAK. Interacts with PTPN12. Interacts with TCF3. Interacts with TCF7L2. Interacts with VCL. Interacts (via LD motif 3) with GIT1. Also interacts with GIT2. Forms a complex with ARHGEF7. Interacts with AR/androgen receptor in a ligand-dependent manner. Interacts with CSK. Interacts with PTK2/FAK1 and PTK2B/PYK2. Interacts with SLC6A3. Interacts with SLC6A4. Interacts with NR3C1. Interacts with SMAD3. Interacts with MAPK15. Interacts with SRC. Interacts with LYN. Interacts with talin. Interacts (via LIM zinc-binding domain 2) with CBLC (via RING-type zinc finger); the interaction is direct and enhances CBLC E3 ubiquitin-protein ligase activity. Interacts with PARVA. Interacts with PXN. Phosphorylated by gonadotropin-releasing hormone-activated SRC. Ubiquitously expressed. Higher expression is detected in lung and spleen. Expression decreases during pregnancy in mammary glands. Expressed in all brain areas, with higher levels in cerebellum, prefrontal cortex and hypothalamus. Expressed in smooth muscle, myoepithelial cells and platelets (at protein level). Preferentially expressed in mesenchymal versus epithelial cells (at protein level).

It is found in the cell junction. The protein resides in the focal adhesion. It localises to the nucleus matrix. The protein localises to the cytoplasm. Its subcellular location is the cytoskeleton. Functionally, functions as a molecular adapter coordinating multiple protein-protein interactions at the focal adhesion complex and in the nucleus. Links various intracellular signaling modules to plasma membrane receptors and regulates the Wnt and TGFB signaling pathways. May also regulate SLC6A3 and SLC6A4 targeting to the plasma membrane hence regulating their activity. In the nucleus, functions as a nuclear receptor coactivator regulating glucocorticoid, androgen, mineralocorticoid and progesterone receptor transcriptional activity. May play a role in the processes of cell growth, proliferation, migration, differentiation and senescence. May have a zinc-dependent DNA-binding activity. The polypeptide is Transforming growth factor beta-1-induced transcript 1 protein (Tgfb1i1) (Mus musculus (Mouse)).